A 142-amino-acid polypeptide reads, in one-letter code: Hemoglobin subunit alpha-A (142 aa).

Residues 2 to 142 (VLSAADKTNV…VGTVLTAKYR (141 aa)) enclose the Globin domain. H59 contacts O2. Residue H88 participates in heme b binding.

This sequence belongs to the globin family. Heterotetramer of two alpha chains and two beta chains. In terms of tissue distribution, red blood cells.

In terms of biological role, involved in oxygen transport from the lung to the various peripheral tissues. The sequence is that of Hemoglobin subunit alpha-A (HBAA) from Anser anser anser (Western greylag goose).